Here is a 206-residue protein sequence, read N- to C-terminus: Probable NAD(+) phosphorylase Rv3189 (206 aa).

It belongs to the MbcT/ParT/Res family. Forms a heterotetramer with cognate antitoxin Rv3188.

It catalyses the reaction phosphate + NAD(+) = ADP-alpha-D-ribose 1''-phosphate + nicotinamide + H(+). Its function is as follows. Probable toxic component of a type II toxin-antitoxin (TA) system. Degrades NAD(+) by phosphorolysis. Neutralized by its cognate antitoxin Rv3188. In Mycobacterium tuberculosis (strain ATCC 25618 / H37Rv), this protein is Probable NAD(+) phosphorylase Rv3189.